The following is a 70-amino-acid chain: UPF0270 protein VIBHAR_00073 (70 aa).

The protein belongs to the UPF0270 family.

This is UPF0270 protein VIBHAR_00073 from Vibrio campbellii (strain ATCC BAA-1116).